The primary structure comprises 96 residues: C-C motif chemokine 20 (96 aa).

An N-terminal signal peptide occupies residues 1–26; that stretch reads MACKHLPFLALAGVLLAYLCSQSEAA. 2 disulfides stabilise this stretch: Cys-31-Cys-58 and Cys-32-Cys-74.

Belongs to the intercrine beta (chemokine CC) family. As to expression, low levels in thymus and lung.

It localises to the secreted. Functionally, acts as a ligand for C-C chemokine receptor CCR6. Signals through binding and activation of CCR6 and induces a strong chemotactic response and mobilization of intracellular calcium ions. The ligand-receptor pair CCL20-CCR6 is responsible for the chemotaxis of dendritic cells (DC), effector/memory T-cells and B-cells and plays an important role at skin and mucosal surfaces under homeostatic and inflammatory conditions, as well as in pathology, including cancer and autoimmune diseases. CCL20 acts as a chemotactic factor that attracts lymphocytes and, slightly, neutrophils, but not monocytes. Involved in the recruitment of both the pro-inflammatory IL17 producing helper T-cells (Th17) and the regulatory T-cells (Treg) to sites of inflammation. Required for optimal migration of thymic natural regulatory T cells (nTregs) and DN1 early thymocyte progenitor cells. Positively regulates sperm motility and chemotaxis via its binding to CCR6 which triggers Ca2+ mobilization in the sperm which is important for its motility. May be involved in formation and function of the mucosal lymphoid tissues by attracting lymphocytes and dendritic cells towards epithelial cells. The sequence is that of C-C motif chemokine 20 (Ccl20) from Rattus norvegicus (Rat).